The primary structure comprises 168 residues: ATP synthase subunit b (168 aa).

A helical transmembrane segment spans residues 9-29 (AIPFGTIAYTLFIFLLLLVML).

This sequence belongs to the ATPase B chain family. In terms of assembly, F-type ATPases have 2 components, F(1) - the catalytic core - and F(0) - the membrane proton channel. F(1) has five subunits: alpha(3), beta(3), gamma(1), delta(1), epsilon(1). F(0) has three main subunits: a(1), b(2) and c(10-14). The alpha and beta chains form an alternating ring which encloses part of the gamma chain. F(1) is attached to F(0) by a central stalk formed by the gamma and epsilon chains, while a peripheral stalk is formed by the delta and b chains.

It is found in the cell membrane. Its function is as follows. F(1)F(0) ATP synthase produces ATP from ADP in the presence of a proton or sodium gradient. F-type ATPases consist of two structural domains, F(1) containing the extramembraneous catalytic core and F(0) containing the membrane proton channel, linked together by a central stalk and a peripheral stalk. During catalysis, ATP synthesis in the catalytic domain of F(1) is coupled via a rotary mechanism of the central stalk subunits to proton translocation. Component of the F(0) channel, it forms part of the peripheral stalk, linking F(1) to F(0). This chain is ATP synthase subunit b, found in Bacillus thuringiensis (strain Al Hakam).